Reading from the N-terminus, the 399-residue chain is Subtilisin-like protease 1 (399 aa).

The signal sequence occupies residues 1–19 (MGVFRFISISLAAVSAANA). A propeptide spanning residues 20–116 (AQILSMPHAQ…VEPDTIISVH (97 aa)) is cleaved from the precursor. The Inhibitor I9 domain occupies 34–115 (SYIVMMKDDT…FVEPDTIISV (82 aa)). The region spanning 126-399 (SWGLARISNP…TNVLINNGGA (274 aa)) is the Peptidase S8 domain. Catalysis depends on charge relay system residues D158 and H190. The segment at 175-198 (GSNQVNDGDDRDGSGHGTHTSGTM) is disordered. N-linked (GlcNAc...) asparagine glycosylation occurs at N251. A compositionally biased stretch (polar residues) spans 282–294 (NDNQDAQSSSPAS). The disordered stretch occupies residues 282-312 (NDNQDAQSSSPASEPSVCTVGSSAEDDSRSS). The active-site Charge relay system is S345.

The protein belongs to the peptidase S8 family.

The protein resides in the secreted. Functionally, secreted subtilisin-like serine protease with keratinolytic activity that contributes to pathogenicity. The chain is Subtilisin-like protease 1 (SUB1) from Arthroderma benhamiae (Trichophyton mentagrophytes).